We begin with the raw amino-acid sequence, 135 residues long: Photosystem II extrinsic protein U (135 aa).

The signal sequence occupies residues 1–29 (MKRLLSWLTGALVMASLMAGLVMPSSVYA).

This sequence belongs to the PsbU family. As to quaternary structure, PSII is composed of 1 copy each of membrane proteins PsbA, PsbB, PsbC, PsbD, PsbE, PsbF, PsbH, PsbI, PsbJ, PsbK, PsbL, PsbM, PsbT, PsbX, PsbY, PsbZ, Psb30/Ycf12, peripheral proteins PsbO, CyanoQ (PsbQ), PsbU, PsbV and a large number of cofactors. It forms dimeric complexes.

It localises to the cellular thylakoid membrane. In terms of biological role, one of the extrinsic, lumenal subunits of photosystem II (PSII). PSII is a light-driven water plastoquinone oxidoreductase, using light energy to abstract electrons from H(2)O, generating a proton gradient subsequently used for ATP formation. The extrinsic proteins stabilize the structure of photosystem II oxygen-evolving complex (OEC), the ion environment of oxygen evolution and protect the OEC against heat-induced inactivation. The chain is Photosystem II extrinsic protein U from Synechococcus sp. (strain CC9605).